Reading from the N-terminus, the 332-residue chain is Endonuclease 8-like 2 (332 aa).

P2 (schiff-base intermediate with DNA) is an active-site residue. The active-site Proton donor is the E3. The active-site Proton donor; for beta-elimination activity is K50. The residue at position 50 (K50) is an N6-acetyllysine. A disordered region spans residues 56–121 (FDPDEEMGPP…EDDSEYLERD (66 aa)). At S68 the chain carries Phosphoserine. The span at 74–84 (PQKEAQKEGAA) shows a compositional bias: basic and acidic residues. Positions 94-105 (GQKTPDGSSQSA) are enriched in polar residues. Residue K154 is modified to N6-acetyllysine. Position 231 (N231) interacts with DNA. An FPG-type zinc finger spans residues 284-320 (QVYQREQCPAGHQVMKEAFGPQDGLQRLTWWCPQCQP). The active-site Proton donor; for delta-elimination activity is the R310.

The protein belongs to the FPG family. As to quaternary structure, binds EP300.

It is found in the nucleus. It catalyses the reaction 2'-deoxyribonucleotide-(2'-deoxyribose 5'-phosphate)-2'-deoxyribonucleotide-DNA = a 3'-end 2'-deoxyribonucleotide-(2,3-dehydro-2,3-deoxyribose 5'-phosphate)-DNA + a 5'-end 5'-phospho-2'-deoxyribonucleoside-DNA + H(+). With respect to regulation, acetylation of Lys-50 leads to loss of DNA nicking activity. Involved in base excision repair of DNA damaged by oxidation or by mutagenic agents. Has DNA glycosylase activity towards 5-hydroxyuracil and other oxidized derivatives of cytosine with a preference for mismatched double-stranded DNA (DNA bubbles). Has low or no DNA glycosylase activity towards thymine glycol, 2-hydroxyadenine, hypoxanthine and 8-oxoguanine. Has AP (apurinic/apyrimidinic) lyase activity and introduces nicks in the DNA strand. Cleaves the DNA backbone by beta-delta elimination to generate a single-strand break at the site of the removed base with both 3'- and 5'-phosphates. The chain is Endonuclease 8-like 2 (NEIL2) from Pongo abelii (Sumatran orangutan).